The primary structure comprises 717 residues: Nuclear factor of activated T-cells, cytoplasmic 1 (717 aa).

Residues 1–38 form a disordered region; that stretch reads MPNTSFPVPSKFPLGPPAAVCGSGETLRPAPPSGGTMK. Residues 120–125 form a calcineurin-binding region; the sequence is PRIEIT. Residues 128–220 are transactivation domain A (TAD-A); sequence LGLHHGSGQF…CVSPKTTDPE (93 aa). The segment at 202-298 is disordered; it reads PQTSPWQSPC…PHGSPRVSVT (97 aa). Over residues 203–216 the composition is skewed to polar residues; it reads QTSPWQSPCVSPKT. 2 tandem repeats follow at residues 205–221 and 235–251. The tract at residues 205–300 is 3 X SP repeats; the sequence is SPWQSPCVSP…GSPRVSVTED (96 aa). Residues Ser-235 and Ser-239 each carry the phosphoserine modification. Residues 238-250 are compositionally biased toward polar residues; sequence HSPSTSPRASITE. Phosphoserine; by PKA is present on Ser-247. A Nuclear localization signal motif is present at residues 267–269; sequence KRK. 2 positions are modified to phosphoserine; by PKA: Ser-271 and Ser-296. Copy 3 of the repeat occupies 284–300; it reads SPTPSPHGSPRVSVTED. The Nuclear export signal signature appears at 312-323; the sequence is SAIVAAINALTT. An RHD domain is found at 411-593; that stretch reads PSLPALDWQL…NPIECSQRSA (183 aa). The DNA-binding element occupies 440-447; that stretch reads RAHYETEG. A Nuclear localization signal motif is present at residues 683–685; that stretch reads KRK.

In terms of assembly, member of the multicomponent NFATC transcription complex that consists of at least two components, a pre-existing cytoplasmic component NFATC2 and an inducible nuclear component NFATC1. Other members such as NFATC4, NFATC3 or members of the activating protein-1 family, MAF, GATA4 and Cbp/p300 can also bind the complex. NFATC proteins bind to DNA as monomers. Interacts with HOMER2 and HOMER3; this interaction may compete with calcineurin/PPP3CA-binding and hence prevent NFATC1 dephosphorylation and activation. Interacts with TLE6/GRG6. In terms of processing, phosphorylated by NFATC-kinase and GSK3B; phosphorylation induces NFATC1 nuclear exit and dephosphorylation by calcineurin promotes nuclear import. Phosphorylation by PKA and DYRK2 negatively modulates nuclear accumulation, and promotes subsequent phosphorylation by GSK3B or casein kinase 1. Expressed in the submandibular gland (at protein level). Expressed in basal epidermal cells (at protein level). Expressed in spleen, skeletal muscle and skin. Express in the lung and thymus. Weakly expressed in heart, brain, liver and kidney. Not expressed in testis. Expressed in osteoclasts. Also expressed during TNFSF11/RANKL-induced differentiation of bone marrow-derived macrophages to osteoclasts.

The protein resides in the cytoplasm. Its subcellular location is the nucleus. Its function is as follows. Plays a role in the inducible expression of cytokine genes in T-cells, especially in the induction of the IL-2 or IL-4 gene transcription. Also controls gene expression in embryonic cardiac cells. Could regulate not only the activation and proliferation but also the differentiation and programmed death of T-lymphocytes as well as lymphoid and non-lymphoid cells. Required for osteoclastogenesis and regulates many genes important for osteoclast differentiation and function. The protein is Nuclear factor of activated T-cells, cytoplasmic 1 (Nfatc1) of Mus musculus (Mouse).